Reading from the N-terminus, the 1041-residue chain is Protein EGT2 (1041 aa).

A signal peptide spans 1–20 (MNKLLLHLVRVISILGLANA). 14 N-linked (GlcNAc...) asparagine glycosylation sites follow: Asn-65, Asn-103, Asn-161, Asn-175, Asn-249, Asn-332, Asn-401, Asn-435, Asn-465, Asn-485, Asn-506, Asn-526, Asn-544, and Asn-556. Residues 388–410 (SSSSISLSAPSSSNSTFTTPSSS) are disordered. Residues 457-492 (SSTLSYTSNVTISVSSATQHTTTPSYVSNSTTLSSS) form repeat 1. The segment at 457–962 (SSTLSYTSNV…TLKTSTFQKA (506 aa)) is 9 X approximate repeats. Repeat copies occupy residues 577–606 (TVAS…ISTI) and 613–647 (SGTD…INTN). Residues Asn-635, Asn-636, Asn-657, and Asn-709 are each glycosylated (N-linked (GlcNAc...) asparagine). Repeat unit 4 spans residues 716 to 745 (TDKSDTYSVISSTESAQVTEYDSLLPISTL). N-linked (GlcNAc...) asparagine glycosylation occurs at Asn-756. 5 tandem repeats follow at residues 773-802 (TDKG…ISTL), 811-840 (TDES…ISTL), 849-886 (TGES…TSLS), 887-924 (TEES…TSLS), and 925-962 (TEES…FQKA). Gly-1020 carries the GPI-anchor amidated glycine lipid modification. Residues 1021 to 1041 (AAGQLTIRIGSLLLGLISFLL) constitute a propeptide, removed in mature form.

In terms of processing, the GPI-anchor is attached to the protein in the endoplasmic reticulum and serves to target the protein to the cell surface. There, the glucosamine-inositol phospholipid moiety is cleaved off and the GPI-modified mannoprotein is covalently attached via its lipidless GPI glycan remnant to the 1,6-beta-glucan of the outer cell wall layer.

Its subcellular location is the secreted. The protein resides in the cell wall. The protein localises to the membrane. Its function is as follows. Seems to be involved in the correct timing of cell separation after cytokinesis, as separation of mutant daughter cells is delayed. Could either be an enzyme necessary for glucans-degradation of the cell wall at the neck region between mother and daughter cells or a regulatory protein controlling this metabolic step. The polypeptide is Protein EGT2 (EGT2) (Saccharomyces cerevisiae (strain ATCC 204508 / S288c) (Baker's yeast)).